The chain runs to 649 residues: Sodium/nucleoside cotransporter 1 (649 aa).

Residues 1–80 are Cytoplasmic-facing; the sequence is MENDPSRRRE…ARSFCREHMQ (80 aa). Residues 81–104 traverse the membrane as a helical segment; sequence LFRWIGTGLLCTGLSAFLLVACLL. At 105-109 the chain is on the extracellular side; that stretch reads DFQRA. A helical transmembrane segment spans residues 110-128; the sequence is LALFVLTCVVLTFLGHRLL. Topologically, residues 129-147 are cytoplasmic; the sequence is KRLLGPKLRRFLKPQGHPR. A helical transmembrane segment spans residues 148-167; that stretch reads LLLWFKRGLALAAFLGLVLW. Over 168 to 178 the chain is Extracellular; that stretch reads LSLDTSQRPEQ. The chain crosses the membrane as a helical span at residues 179–195; sequence LVSFAGICVFVALLFAC. Residues 196–201 lie on the Cytoplasmic side of the membrane; sequence SKHHCA. The chain crosses the membrane as a helical span at residues 202–222; that stretch reads VSWRAVSWGLGLQFVLGLLVI. At 223-261 the chain is on the extracellular side; the sequence is RTEPGFIAFEWLGEQIRIFLSYTKAGSSFVFGEALVKDV. The chain crosses the membrane as a helical span at residues 262-283; the sequence is FAFQVLPIIVFFSCVISVLYHV. The Cytoplasmic portion of the chain corresponds to 284-294; the sequence is GLMQWVILKIA. A helical membrane pass occupies residues 295-318; the sequence is WLMQVTMGTTATETLSVAGNIFVS. Residues 319-337 lie on the Extracellular side of the membrane; that stretch reads QTEAPLLIRPYLADMTLSE. Residues 338-360 form a helical membrane-spanning segment; it reads VHVVMTGGYATIAGSLLGAYISF. At 361–366 the chain is on the cytoplasmic side; it reads GIDATS. The chain crosses the membrane as a helical span at residues 367–386; it reads LIAASVMAAPCALALSKLVY. Residues 387–423 lie on the Extracellular side of the membrane; that stretch reads PEVEESKFRREEGVKLTYGDAQNLIEAASTGAAISVK. Residues 424 to 446 form a helical membrane-spanning segment; that stretch reads VVANIAANLIAFLAVLDFINAAL. Residues 447 to 457 lie on the Cytoplasmic side of the membrane; sequence SWLGDMVDIQG. The helical transmembrane segment at 458-479 threads the bilayer; it reads LSFQLICSYILRPVAFLMGVAW. Over 480-534 the chain is Extracellular; the sequence is EDCPVVAELLGIKLFLNEFVAYQDLSKYKQRRLAGAEEWVGDRKQWISVRAEVLT. Residues 535 to 558 traverse the membrane as a helical segment; it reads TFALCGFANFSSIGIMLGGLTSMV. The Cytoplasmic segment spans residues 559–569; it reads PQRKSDFSQIV. A helical membrane pass occupies residues 570-592; sequence LRALFTGACVSLVNACMAGILYM. Residues 593–649 are Extracellular-facing; it reads PRGAEVDCMSLLNTTLSSSSFEIYQCCREAFQSVNPEFSPEALDNCCRFYNHTICAQ. 2 N-linked (GlcNAc...) asparagine glycosylation sites follow: asparagine 605 and asparagine 643.

The protein belongs to the concentrative nucleoside transporter (CNT) (TC 2.A.41) family. Post-translationally, N-glycosylated. N-glycosylation is required for localization to the plasma membrane and the transporter activity. Expressed in kidney.

The protein resides in the cell membrane. It is found in the apical cell membrane. It catalyses the reaction uridine(out) + Na(+)(out) = uridine(in) + Na(+)(in). The catalysed reaction is thymidine(out) + Na(+)(out) = thymidine(in) + Na(+)(in). The enzyme catalyses cytidine(out) + Na(+)(out) = cytidine(in) + Na(+)(in). It carries out the reaction adenosine(out) + Na(+)(out) = adenosine(in) + Na(+)(in). Due to its high apparent affinity but slow transport, adenosine could act as a negative regulator of pyrimidine transport under some conditions. Functionally, sodium and pyrimidine nucleoside symporter of the plasma membrane that imports uridine, thymidine and cytidine into cells by coupling their transport to the transmembrane sodium electrochemical gradient. Also transports adenosine, an atypical substrate transported with high apparent affinity, but low maximum velocity. Therefore, exhibits the transport characteristics of the nucleoside transport system cit or N2 subtype (N2/cit). Involved in renal nucleoside (re)absorption. This Homo sapiens (Human) protein is Sodium/nucleoside cotransporter 1.